The primary structure comprises 305 residues: GPI-anchored hemophore cfmA (305 aa).

An N-terminal signal peptide occupies residues 1–18 (MKASVSLLLLSAASMASA). Positions 19 to 111 (AMSVSQCAQM…GSGSGSDSGS (93 aa)) constitute a CFEM domain. Cystine bridges form between C25–C68, C29–C63, C42–C49, and C51–C84. D46 contributes to the heme binding site. A disordered region spans residues 92–287 (TATGAGGSSS…STGNVAPRGA (196 aa)). A compositionally biased stretch (gly residues) spans 95 to 149 (GAGGSSSGSGSGSDSGSGSGSGSGSGSGSGSGSGSSSGSGSGSGSGSGSGSGSNS). Composition is skewed to low complexity over residues 150–186 (GSGS…NSTT), 196–259 (GASS…TATG), and 267–287 (GSAS…PRGA). Residues N183, N203, N237, N243, and N275 are each glycosylated (N-linked (GlcNAc...) asparagine). S276 carries the GPI-like-anchor amidated serine lipid modification. Residues 277 to 305 (SSTGNVAPRGAVVGSGAVGALALAALIIL) constitute a propeptide, removed in mature form.

This sequence belongs to the RBT5 family. In terms of processing, the GPI-like anchor contains a phosphoceramide lipid group. Post-translationally, the GPI-anchor is attached to the protein in the endoplasmic reticulum and serves to target the protein to the cell surface. There, the glucosamine-inositol phospholipid moiety is cleaved off and the GPI-modified mannoprotein is covalently attached via its lipidless GPI glycan remnant to the 1,6-beta-glucan of the outer cell wall layer.

It localises to the secreted. The protein localises to the cell wall. Its subcellular location is the cell membrane. Functionally, GPI-anchored cell wall protein involved in stabilizing the cell wall. Not implicated in virulence, heme uptake and biofilm formation. The polypeptide is GPI-anchored hemophore cfmA (Aspergillus fumigatus (strain ATCC MYA-4609 / CBS 101355 / FGSC A1100 / Af293) (Neosartorya fumigata)).